Reading from the N-terminus, the 172-residue chain is Protein-export protein SecB (172 aa).

Residues 152 to 172 (AQGAEGGNSGIVMPDGSQARH) form a disordered region.

The protein belongs to the SecB family. Homotetramer, a dimer of dimers. One homotetramer interacts with 1 SecA dimer.

It is found in the cytoplasm. Its function is as follows. One of the proteins required for the normal export of preproteins out of the cell cytoplasm. It is a molecular chaperone that binds to a subset of precursor proteins, maintaining them in a translocation-competent state. It also specifically binds to its receptor SecA. This is Protein-export protein SecB from Cupriavidus necator (strain ATCC 17699 / DSM 428 / KCTC 22496 / NCIMB 10442 / H16 / Stanier 337) (Ralstonia eutropha).